The chain runs to 155 residues: Ribosome-binding factor A (155 aa).

Belongs to the RbfA family. As to quaternary structure, monomer. Binds 30S ribosomal subunits, but not 50S ribosomal subunits or 70S ribosomes.

It is found in the cytoplasm. Its function is as follows. One of several proteins that assist in the late maturation steps of the functional core of the 30S ribosomal subunit. Associates with free 30S ribosomal subunits (but not with 30S subunits that are part of 70S ribosomes or polysomes). Required for efficient processing of 16S rRNA. May interact with the 5'-terminal helix region of 16S rRNA. This chain is Ribosome-binding factor A, found in Methylocella silvestris (strain DSM 15510 / CIP 108128 / LMG 27833 / NCIMB 13906 / BL2).